The sequence spans 429 residues: GTPase Obg (429 aa).

Positions 1–158 (MLIDKCTLFL…IEAQFELKYI (158 aa)) constitute an Obg domain. In terms of domain architecture, OBG-type G spans 159–330 (ADVGLLGLPN…LLKDIFKDYK (172 aa)). Residues 165–172 (GLPNAGKS), 190–194 (FTTLS), 211–214 (DIPG), 281–284 (NKID), and 311–313 (SGF) contribute to the GTP site. 2 residues coordinate Mg(2+): serine 172 and threonine 192. The region spanning 351–429 (KVEKEQEDIV…RIQDVMFEIN (79 aa)) is the OCT domain.

The protein belongs to the TRAFAC class OBG-HflX-like GTPase superfamily. OBG GTPase family. As to quaternary structure, monomer. Mg(2+) is required as a cofactor.

It localises to the cytoplasm. In terms of biological role, an essential GTPase which binds GTP, GDP and possibly (p)ppGpp with moderate affinity, with high nucleotide exchange rates and a fairly low GTP hydrolysis rate. Plays a role in control of the cell cycle, stress response, ribosome biogenesis and in those bacteria that undergo differentiation, in morphogenesis control. This chain is GTPase Obg, found in Malacoplasma penetrans (strain HF-2) (Mycoplasma penetrans).